The sequence spans 360 residues: Farnesyl pyrophosphate synthase (360 aa).

Isopentenyl diphosphate is bound by residues lysine 52, arginine 55, and glutamine 90. Mg(2+) contacts are provided by aspartate 97 and aspartate 101. Arginine 106 serves as a coordination point for dimethylallyl diphosphate. Arginine 107 provides a ligand contact to isopentenyl diphosphate. Dimethylallyl diphosphate contacts are provided by lysine 194, threonine 195, glutamine 237, lysine 254, and lysine 263.

This sequence belongs to the FPP/GGPP synthase family. Requires Mg(2+) as cofactor.

It catalyses the reaction isopentenyl diphosphate + dimethylallyl diphosphate = (2E)-geranyl diphosphate + diphosphate. The enzyme catalyses isopentenyl diphosphate + (2E)-geranyl diphosphate = (2E,6E)-farnesyl diphosphate + diphosphate. It functions in the pathway isoprenoid biosynthesis; farnesyl diphosphate biosynthesis; farnesyl diphosphate from geranyl diphosphate and isopentenyl diphosphate: step 1/1. It participates in isoprenoid biosynthesis; geranyl diphosphate biosynthesis; geranyl diphosphate from dimethylallyl diphosphate and isopentenyl diphosphate: step 1/1. Farnesyl pyrophosphate synthase; part of the second module of ergosterol biosynthesis pathway that includes the middle steps of the pathway. The second module involves the formation of farnesyl diphosphate, which is also an important intermediate in the biosynthesis of ubiquinone, dolichol, heme and prenylated proteins. This module also plays a key role in the biosynthesis of triterpenes such as ganoderic acids (GA), a group of highly oxygenated lanostane-type triterpenoids which are well recognized as a main group of unique bioactive compounds in the medicinal mushroom Ganoderma lucidum. Activity by the mevalonate kinase first converts mevalonate into 5-phosphomevalonate. 5-phosphomevalonate is then further converted to 5-diphosphomevalonate by the phosphomevalonate kinase. The diphosphomevalonate decarboxylase MVD then produces isopentenyl diphosphate. The isopentenyl-diphosphate delta-isomerase then catalyzes the 1,3-allylic rearrangement of the homoallylic substrate isopentenyl (IPP) to its highly electrophilic allylic isomer, dimethylallyl diphosphate (DMAPP). Finally the farnesyl diphosphate synthase FPS catalyzes the sequential condensation of isopentenyl pyrophosphate with dimethylallyl pyrophosphate, and then with the resultant geranylpyrophosphate to the ultimate product farnesyl pyrophosphate. The polypeptide is Farnesyl pyrophosphate synthase (Ganoderma lucidum (Ling zhi medicinal fungus)).